The chain runs to 141 residues: Large ribosomal subunit protein uL11 (141 aa).

Residues 1–23 (MAKQVTGQAKFQVPGGQATPAPP) form a disordered region.

Belongs to the universal ribosomal protein uL11 family. In terms of assembly, part of the ribosomal stalk of the 50S ribosomal subunit. Interacts with L10 and the large rRNA to form the base of the stalk. L10 forms an elongated spine to which L12 dimers bind in a sequential fashion forming a multimeric L10(L12)X complex. In terms of processing, one or more lysine residues are methylated.

In terms of biological role, forms part of the ribosomal stalk which helps the ribosome interact with GTP-bound translation factors. The protein is Large ribosomal subunit protein uL11 of Rhodopirellula baltica (strain DSM 10527 / NCIMB 13988 / SH1).